The following is a 669-amino-acid chain: Elongation factor G 2 (669 aa).

Residues 1-276 form the tr-type G domain; that stretch reads MGIRNIGIMA…SIVDYLPSPF (276 aa). GTP is bound by residues 10–17, 74–78, and 128–131; these read AHIDAGKT, DTPGH, and NKMD.

It belongs to the TRAFAC class translation factor GTPase superfamily. Classic translation factor GTPase family. EF-G/EF-2 subfamily.

It is found in the cytoplasm. Functionally, catalyzes the GTP-dependent ribosomal translocation step during translation elongation. During this step, the ribosome changes from the pre-translocational (PRE) to the post-translocational (POST) state as the newly formed A-site-bound peptidyl-tRNA and P-site-bound deacylated tRNA move to the P and E sites, respectively. Catalyzes the coordinated movement of the two tRNA molecules, the mRNA and conformational changes in the ribosome. This chain is Elongation factor G 2 (fusA2), found in Borreliella afzelii (strain PKo) (Borrelia afzelii).